We begin with the raw amino-acid sequence, 349 residues long: MEFATVSPPDPGAAAAARARQDTLTKPRGALGRLEDLSVWIAACQGQCPPRQFERARVVVFAGDHGVARCGVSAYPPEVTAQMVANFDAGGAAINALAGVAGASVRVADLAVDADPPDDRIGANKVRRGSGDITVQDALTAEETERALSAGAAIADEEVDAGADLLIAGDMGIGNTTAAAVLVAALTNVEPVVAVGFGTGIDDAGWARKTAAVRDALFRARRVLPDPVALLRCAGGADLAALAGFCAQAAVRRTPLLLDGMAVTAAALVAEHLAPGARLWWQAGHRSTEPGHALALTALDLEPILDLRMRLGEGTGAALALPIVRAAVAALSSMATFAQAGVSDPSAHP.

Glu313 acts as the Proton acceptor in catalysis.

Belongs to the CobT family.

It catalyses the reaction 5,6-dimethylbenzimidazole + nicotinate beta-D-ribonucleotide = alpha-ribazole 5'-phosphate + nicotinate + H(+). It participates in nucleoside biosynthesis; alpha-ribazole biosynthesis; alpha-ribazole from 5,6-dimethylbenzimidazole: step 1/2. Catalyzes the synthesis of alpha-ribazole-5'-phosphate from nicotinate mononucleotide (NAMN) and 5,6-dimethylbenzimidazole (DMB). The sequence is that of Nicotinate-nucleotide--dimethylbenzimidazole phosphoribosyltransferase from Mycobacterium avium (strain 104).